The primary structure comprises 379 residues: MKFITAILVIFCVYLLSTAGDSKILPLKKLPSKIFGHLKSHVDNTVKKPLKVFGHLKSHVENSVGPLRMNKLTPNCIFGVKSMSMVLFTKNIPDGKYISLDSDLGRDLDLTKTIYFTAHGFISNVNHSLSNRLSRALVEKDYTVFSLDWSDAACTTGGLPLVKLLGYPSAVQNTREIGNLMADYVMSLIDHGASLRNMAFIGHSLGSHVCGFASKKIYESGYGKVPLLFAADPAQPLFQLKQCPDRLCDTDAKLVITLHTSQIGLGYPIGGLDLYFNGGFVQPKCHLDITCAHIRSVLYLINMVEKKCSFPGIPATYKQILNPFSKFPYPNSKTTDCFVMDDSIFNPRRKSLQNLAGGIYYMFVDPDTFCTRKNFNCQR.

A signal peptide spans 1–20; that stretch reads MKFITAILVIFCVYLLSTAG. Positions 21 to 73 are excised as a propeptide; it reads DSKILPLKKLPSKIFGHLKSHVDNTVKKPLKVFGHLKSHVENSVGPLRMNKLT. Cysteine 76 and cysteine 154 are joined by a disulfide. N-linked (GlcNAc...) asparagine glycosylation is present at asparagine 126. Residue serine 204 is the Nucleophile of the active site. Aspartate 232 serves as the catalytic Charge relay system. Cystine bridges form between cysteine 243–cysteine 248 and cysteine 285–cysteine 291. Histidine 293 (charge relay system) is an active-site residue.

It belongs to the AB hydrolase superfamily. Lipase family. Contains five disulfide bonds. As to expression, expressed by the venom gland.

The protein resides in the secreted. It catalyses the reaction a 1,2-diacyl-sn-glycero-3-phosphocholine + H2O = a 2-acyl-sn-glycero-3-phosphocholine + a fatty acid + H(+). In terms of biological role, catalyzes the hydrolysis of phosphatidylcholine with phospholipase A1 activity. May act as an allergen and induce hemolytic activity. The protein is Phospholipase A1 of Dinoponera quadriceps (South American ant).